Here is a 311-residue protein sequence, read N- to C-terminus: Aspartate carbamoyltransferase catalytic subunit (311 aa).

2 residues coordinate carbamoyl phosphate: Arg-55 and Thr-56. Lys-85 contributes to the L-aspartate binding site. Residues Arg-106, His-135, and Gln-138 each contribute to the carbamoyl phosphate site. The L-aspartate site is built by Arg-168 and Arg-230. The carbamoyl phosphate site is built by Leu-268 and Pro-269.

It belongs to the aspartate/ornithine carbamoyltransferase superfamily. ATCase family. In terms of assembly, heterododecamer (2C3:3R2) of six catalytic PyrB chains organized as two trimers (C3), and six regulatory PyrI chains organized as three dimers (R2).

The catalysed reaction is carbamoyl phosphate + L-aspartate = N-carbamoyl-L-aspartate + phosphate + H(+). It participates in pyrimidine metabolism; UMP biosynthesis via de novo pathway; (S)-dihydroorotate from bicarbonate: step 2/3. Catalyzes the condensation of carbamoyl phosphate and aspartate to form carbamoyl aspartate and inorganic phosphate, the committed step in the de novo pyrimidine nucleotide biosynthesis pathway. In Salmonella paratyphi A (strain AKU_12601), this protein is Aspartate carbamoyltransferase catalytic subunit.